A 100-amino-acid chain; its full sequence is Enhancer of yellow 2 transcription factor (100 aa).

The protein belongs to the ENY2 family. Component of the nuclear pore complex (NPC)-associated AMEX complex (anchoring and mRNA export complex), composed of at least e(y)2 and xmas-2. Component of the SAGA transcription coactivator-HAT complexes, at least composed of Ada2b, e(y)2, Pcaf/Gcn5, Taf10 and Nipped-A/Trrap. Within the SAGA complex, e(y)2, Sgf11, and not/nonstop form an additional subcomplex of SAGA called the DUB module (deubiquitination module). Component of the THO complex, composed of at least e(y)2, HPR1, THO2, THOC5, THOC6 and THOC7. Interacts with e(y)1. Interacts with su(Hw) (via zinc fingers). Interacts with xmas-2; required for localization to the nuclear periphery. Interacts with the nuclear pore complex (NPC).

Its subcellular location is the nucleus. It is found in the nucleoplasm. It localises to the cytoplasm. Involved in mRNA export coupled transcription activation by association with both the AMEX and the SAGA complexes. The SAGA complex is a multiprotein complex that activates transcription by remodeling chromatin and mediating histone acetylation and deubiquitination. Within the SAGA complex, participates in a subcomplex that specifically deubiquitinates histone H2B. The SAGA complex is recruited to specific gene promoters by activators, where it is required for transcription. Required for nuclear receptor-mediated transactivation. Involved in transcription elongation by recruiting the THO complex onto nascent mRNA. The AMEX complex functions in docking export-competent ribonucleoprotein particles (mRNPs) to the nuclear entrance of the nuclear pore complex (nuclear basket). AMEX participates in mRNA export and accurate chromatin positioning in the nucleus by tethering genes to the nuclear periphery. The chain is Enhancer of yellow 2 transcription factor from Drosophila pseudoobscura pseudoobscura (Fruit fly).